Here is a 932-residue protein sequence, read N- to C-terminus: RNA-binding protein 12 (932 aa).

Residues 96–116 (DIPPANASRSGPPPSSGMSSR) are disordered. Low complexity predominate over residues 98–116 (PPANASRSGPPPSSGMSSR). The 76-residue stretch at 304–379 (LYVSVHGMPF…RYVEVSPATE (76 aa)) folds into the RRM 1 domain. Phosphoserine is present on residues S352 and S375. 2 stretches are compositionally biased toward polar residues: residues 392–401 (KQNMGPSGQT) and 408–417 (LPRSKSPSGQ). The interval 392 to 424 (KQNMGPSGQTHPPPQTLPRSKSPSGQKRSRSRS) is disordered. S420, S422, and S424 each carry phosphoserine. One can recognise an RRM 2 domain in the interval 430 to 507 (FCVYLKGLPF…RFIQVHPITK (78 aa)). Phosphoserine is present on S525. Positions 717–734 (NGPPFNFPGNFGGSNAFG) are enriched in low complexity. Residues 717 to 853 (NGPPFNFPGN…PGFASSSGKP (137 aa)) are disordered. Gly residues predominate over residues 783 to 811 (SGFGGGPQNFGNGPGSLGGPPGFGSGPPG). Positions 824-836 (AFGPGPGPGPGPG) are enriched in pro residues. Residues 856–932 (TVIKVQNMPF…GSRKVKLVLG (77 aa)) enclose the RRM 3 domain.

The protein localises to the nucleus. The chain is RNA-binding protein 12 (RBM12) from Homo sapiens (Human).